The primary structure comprises 383 residues: tRNA-specific 2-thiouridylase MnmA (383 aa).

Residues 16–23 and Leu42 each bind ATP; that span reads AMSGGVDS. Cys110 functions as the Nucleophile in the catalytic mechanism. A disulfide bridge connects residues Cys110 and Cys209. Gly134 is an ATP binding site. The segment at 159–161 is interaction with tRNA; the sequence is KDQ. Cys209 acts as the Cysteine persulfide intermediate in catalysis.

The protein belongs to the MnmA/TRMU family.

It is found in the cytoplasm. The enzyme catalyses S-sulfanyl-L-cysteinyl-[protein] + uridine(34) in tRNA + AH2 + ATP = 2-thiouridine(34) in tRNA + L-cysteinyl-[protein] + A + AMP + diphosphate + H(+). Its function is as follows. Catalyzes the 2-thiolation of uridine at the wobble position (U34) of tRNA, leading to the formation of s(2)U34. This is tRNA-specific 2-thiouridylase MnmA from Caulobacter vibrioides (strain ATCC 19089 / CIP 103742 / CB 15) (Caulobacter crescentus).